We begin with the raw amino-acid sequence, 421 residues long: 4-hydroxy-3-methylbut-2-en-1-yl diphosphate synthase (flavodoxin) (421 aa).

Residues Cys-298, Cys-301, Cys-344, and Glu-351 each coordinate [4Fe-4S] cluster.

Belongs to the IspG family. [4Fe-4S] cluster is required as a cofactor.

The catalysed reaction is (2E)-4-hydroxy-3-methylbut-2-enyl diphosphate + oxidized [flavodoxin] + H2O + 2 H(+) = 2-C-methyl-D-erythritol 2,4-cyclic diphosphate + reduced [flavodoxin]. It functions in the pathway isoprenoid biosynthesis; isopentenyl diphosphate biosynthesis via DXP pathway; isopentenyl diphosphate from 1-deoxy-D-xylulose 5-phosphate: step 5/6. Functionally, converts 2C-methyl-D-erythritol 2,4-cyclodiphosphate (ME-2,4cPP) into 1-hydroxy-2-methyl-2-(E)-butenyl 4-diphosphate. The chain is 4-hydroxy-3-methylbut-2-en-1-yl diphosphate synthase (flavodoxin) from Neisseria meningitidis serogroup B (strain ATCC BAA-335 / MC58).